A 149-amino-acid polypeptide reads, in one-letter code: L-alanine exporter AlaE (149 aa).

4 consecutive transmembrane segments (helical) span residues 16-36 (FAMV…LSGM), 46-66 (LVAI…RDLI), 85-105 (VLAY…TVGA), and 112-132 (AAVS…GYFL).

It belongs to the AlaE exporter family.

It is found in the cell inner membrane. Exports L-alanine. This chain is L-alanine exporter AlaE, found in Salmonella arizonae (strain ATCC BAA-731 / CDC346-86 / RSK2980).